The sequence spans 207 residues: ATP synthase subunit 5, mitochondrial (207 aa).

It belongs to the ATPase delta chain family. As to quaternary structure, F-type ATPases have 2 components, CF(1) - the catalytic core - and CF(0) - the membrane proton channel. CF(1) has five subunits: alpha(3), beta(3), gamma(1), delta(1), epsilon(1). CF(0) has three main subunits: a, b and c.

It localises to the mitochondrion. The protein resides in the mitochondrion inner membrane. In terms of biological role, mitochondrial membrane ATP synthase (F(1)F(0) ATP synthase or Complex V) produces ATP from ADP in the presence of a proton gradient across the membrane which is generated by electron transport complexes of the respiratory chain. F-type ATPases consist of two structural domains, F(1) - containing the extramembraneous catalytic core and F(0) - containing the membrane proton channel, linked together by a central stalk and a peripheral stalk. During catalysis, ATP synthesis in the catalytic domain of F(1) is coupled via a rotary mechanism of the central stalk subunits to proton translocation. Part of the complex F(0) domain and the peripheric stalk, which acts as a stator to hold the catalytic alpha(3)beta(3) subcomplex and subunit a/ATP6 static relative to the rotary elements. This chain is ATP synthase subunit 5, mitochondrial (ATP5), found in Eremothecium gossypii (strain ATCC 10895 / CBS 109.51 / FGSC 9923 / NRRL Y-1056) (Yeast).